Here is a 300-residue protein sequence, read N- to C-terminus: F-box/LRR-repeat protein 15 (300 aa).

Met1 bears the N-acetylmethionine mark. The F-box domain maps to 19–66; it reads LLDLPWEDVLLPHILSRVPLRQLLRLQRVSRAFRALVQLHLAGLRRFD. The interaction with SMURF1 stretch occupies residues 113–269; sequence NPQLRSVALA…EPSLSRLRKR (157 aa). 5 LRR repeats span residues 141-162, 167-188, 194-215, 220-241, and 246-267; these read RLQR…RGLA, ALEE…VYLA, GLRS…QELA, ELEH…RTLA, and ALRS…SRLR.

The protein belongs to the FBXL15 family. Part of the SCF (SKP1-CUL1-F-box) E3 ubiquitin-protein ligase complex SCF(FBXL15) composed of CUL1, SKP1, RBX1 and FBXL15.

It is found in the cytoplasm. Its pathway is protein modification; protein ubiquitination. Functionally, substrate recognition component of a SCF (SKP1-CUL1-F-box protein) E3 ubiquitin-protein ligase complex which mediates the ubiquitination and subsequent proteasomal degradation of SMURF1, thereby acting as a positive regulator of the BMP signaling pathway. Required for dorsal/ventral pattern formation and bone mass maintenance. Also mediates ubiquitination of SMURF2 and WWP2. This chain is F-box/LRR-repeat protein 15 (FBXL15), found in Canis lupus familiaris (Dog).